Consider the following 413-residue polypeptide: Serine hydroxymethyltransferase (413 aa).

(6S)-5,6,7,8-tetrahydrofolate contacts are provided by residues L117 and 121-123 (GHL). K226 carries the N6-(pyridoxal phosphate)lysine modification. Residues E239 and 349-351 (SPF) contribute to the (6S)-5,6,7,8-tetrahydrofolate site.

It belongs to the SHMT family. Homodimer. It depends on pyridoxal 5'-phosphate as a cofactor.

The protein resides in the cytoplasm. It carries out the reaction (6R)-5,10-methylene-5,6,7,8-tetrahydrofolate + glycine + H2O = (6S)-5,6,7,8-tetrahydrofolate + L-serine. Its pathway is one-carbon metabolism; tetrahydrofolate interconversion. The protein operates within amino-acid biosynthesis; glycine biosynthesis; glycine from L-serine: step 1/1. Functionally, catalyzes the reversible interconversion of serine and glycine with tetrahydrofolate (THF) serving as the one-carbon carrier. This reaction serves as the major source of one-carbon groups required for the biosynthesis of purines, thymidylate, methionine, and other important biomolecules. Also exhibits THF-independent aldolase activity toward beta-hydroxyamino acids, producing glycine and aldehydes, via a retro-aldol mechanism. The polypeptide is Serine hydroxymethyltransferase (Bacillus cereus (strain AH820)).